A 268-amino-acid chain; its full sequence is Tryptophan synthase alpha chain (268 aa).

Residues Glu49 and Asp60 each act as proton acceptor in the active site.

The protein belongs to the TrpA family. As to quaternary structure, tetramer of two alpha and two beta chains.

The catalysed reaction is (1S,2R)-1-C-(indol-3-yl)glycerol 3-phosphate + L-serine = D-glyceraldehyde 3-phosphate + L-tryptophan + H2O. It participates in amino-acid biosynthesis; L-tryptophan biosynthesis; L-tryptophan from chorismate: step 5/5. Its function is as follows. The alpha subunit is responsible for the aldol cleavage of indoleglycerol phosphate to indole and glyceraldehyde 3-phosphate. The sequence is that of Tryptophan synthase alpha chain from Escherichia coli O157:H7.